A 980-amino-acid chain; its full sequence is Vacuolar protein sorting-associated protein 11 homolog (980 aa).

A CHCR repeat occupies 407 to 554 (YKETIGMLEP…GRDLLIHARD (148 aa)). An RING-type; atypical zinc finger spans residues 803–843 (CSACDTPLQLPTVHFLCKHAYHVHCFESYNMDGSDKCPACQ). Residues 886 to 898 (TKKTKKSEAKKDP) show a composition bias toward basic and acidic residues. Residues 886–980 (TKKTKKSEAK…APAPSTNPFD (95 aa)) are disordered. Composition is skewed to polar residues over residues 917–937 (TTISRTMSTVSSNMATPSRQR) and 947–960 (TNPFFNSDSGTRLS).

The protein belongs to the VPS11 family. Probable core component of at least two putative endosomal tethering complexes, the homotypic fusion and vacuole protein sorting (HOPS) complex and the class C core vacuole/endosome tethering (CORVET) complex. Their common core is composed of the class C Vps proteins vps-11, vps-16 and vps-18, which in HOPS further associates with vps-33.1, vps-39 and vps-41 and in CORVET with vps-8 and vps-33.2.

It localises to the late endosome membrane. The protein localises to the lysosome membrane. In terms of biological role, plays a role in vesicle-mediated protein trafficking to lysosomal compartments including the endocytic membrane transport pathways. Believed to act as a core component of the putative HOPS and CORVET endosomal tethering complexes which are proposed to be involved in the rab-5-to-rab-7 endosome conversion probably implicating sand-1, and via binding SNAREs and SNARE complexes to mediate tethering and docking events during SNARE-mediated membrane fusion. The HOPS complex is proposed to be recruited to Rab7 on the late endosomal membrane and to regulate late endocytic, phagocytic and autophagic traffic towards lysosomes. Within the HOPS complex, contributes to the normal development of gut granules in embryonic and adult intestinal cells. The CORVET complex is proposed to function as a Rab5 effector to mediate early endosome fusion probably in specific endosome subpopulations. Required for fusion of endosomes and autophagosomes with lysosomes. Involved in cargo transport from early to late endosomes and required for the transition from early to late endosomes. Possibly has a role in clearance of apoptotic cells during programmed cell death. The polypeptide is Vacuolar protein sorting-associated protein 11 homolog (Caenorhabditis elegans).